The primary structure comprises 331 residues: dTDP-glucose 4,6-dehydratase (331 aa).

Residues 11 to 12 (FI), 33 to 36 (DALT), 57 to 58 (DI), 77 to 81 (FAAES), and Thr96 contribute to the NAD(+) site. Ser81 contacts substrate. Position 120 (Thr120) interacts with substrate. The Proton donor role is filled by Asp121. Residues Glu122 and Tyr147 each act as proton acceptor in the active site. 147-151 (YSATK) contributes to the NAD(+) binding site. Residue Asn176 coordinates substrate. Asn177 serves as a coordination point for NAD(+). Residues 186–191 (KFIPRQ), 202–204 (KLY), Arg211, Asn246, and 269–273 (DRVGH) each bind substrate.

Belongs to the NAD(P)-dependent epimerase/dehydratase family. dTDP-glucose dehydratase subfamily. As to quaternary structure, homodimer. NAD(+) serves as cofactor.

The catalysed reaction is dTDP-alpha-D-glucose = dTDP-4-dehydro-6-deoxy-alpha-D-glucose + H2O. It functions in the pathway carbohydrate biosynthesis; dTDP-L-rhamnose biosynthesis. Catalyzes the dehydration of dTDP-D-glucose to form dTDP-6-deoxy-D-xylo-4-hexulose via a three-step process involving oxidation, dehydration and reduction. Involved in the biosynthesis of the dTDP-L-rhamnose which is a component of the critical linker, D-N-acetylglucosamine-L-rhamnose disaccharide, which connects the galactan region of arabinogalactan to peptidoglycan via a phosphodiester linkage. This chain is dTDP-glucose 4,6-dehydratase (rmlB), found in Mycobacterium tuberculosis (strain CDC 1551 / Oshkosh).